The following is a 415-amino-acid chain: Pectin acetylesterase 12 (415 aa).

Residues 1 to 20 (MVKLLLVGFVVAGIILGTQA) form the signal peptide. A glycan (N-linked (GlcNAc...) asparagine) is linked at N27. Active-site charge relay system residues include S197, D293, and H360.

Belongs to the pectinacetylesterase family.

The protein localises to the secreted. It is found in the cell wall. Hydrolyzes acetyl esters in homogalacturonan regions of pectin. In type I primary cell wall, galacturonic acid residues of pectin can be acetylated at the O-2 and O-3 positions. Decreasing the degree of acetylation of pectin gels in vitro alters their physical properties. This is Pectin acetylesterase 12 from Arabidopsis thaliana (Mouse-ear cress).